The chain runs to 315 residues: Acetyl-coenzyme A carboxylase carboxyl transferase subunit alpha (315 aa).

A CoA carboxyltransferase C-terminal domain is found at 39–293 (RLQDKSSTLT…RGELASQLAM (255 aa)).

Belongs to the AccA family. Acetyl-CoA carboxylase is a heterohexamer composed of biotin carboxyl carrier protein (AccB), biotin carboxylase (AccC) and two subunits each of ACCase subunit alpha (AccA) and ACCase subunit beta (AccD).

It is found in the cytoplasm. The enzyme catalyses N(6)-carboxybiotinyl-L-lysyl-[protein] + acetyl-CoA = N(6)-biotinyl-L-lysyl-[protein] + malonyl-CoA. The protein operates within lipid metabolism; malonyl-CoA biosynthesis; malonyl-CoA from acetyl-CoA: step 1/1. In terms of biological role, component of the acetyl coenzyme A carboxylase (ACC) complex. First, biotin carboxylase catalyzes the carboxylation of biotin on its carrier protein (BCCP) and then the CO(2) group is transferred by the carboxyltransferase to acetyl-CoA to form malonyl-CoA. The protein is Acetyl-coenzyme A carboxylase carboxyl transferase subunit alpha of Pseudomonas fluorescens (strain SBW25).